The following is a 479-amino-acid chain: Aspartyl/glutamyl-tRNA(Asn/Gln) amidotransferase subunit B (479 aa).

It belongs to the GatB/GatE family. GatB subfamily. Heterotrimer of A, B and C subunits.

It carries out the reaction L-glutamyl-tRNA(Gln) + L-glutamine + ATP + H2O = L-glutaminyl-tRNA(Gln) + L-glutamate + ADP + phosphate + H(+). The catalysed reaction is L-aspartyl-tRNA(Asn) + L-glutamine + ATP + H2O = L-asparaginyl-tRNA(Asn) + L-glutamate + ADP + phosphate + 2 H(+). Its function is as follows. Allows the formation of correctly charged Asn-tRNA(Asn) or Gln-tRNA(Gln) through the transamidation of misacylated Asp-tRNA(Asn) or Glu-tRNA(Gln) in organisms which lack either or both of asparaginyl-tRNA or glutaminyl-tRNA synthetases. The reaction takes place in the presence of glutamine and ATP through an activated phospho-Asp-tRNA(Asn) or phospho-Glu-tRNA(Gln). In Halorhodospira halophila (strain DSM 244 / SL1) (Ectothiorhodospira halophila (strain DSM 244 / SL1)), this protein is Aspartyl/glutamyl-tRNA(Asn/Gln) amidotransferase subunit B.